A 235-amino-acid polypeptide reads, in one-letter code: MAQRSKAYKAAKAAIGEDLYSPVEAIRLAKETNPSKTDATVEVALRLSVDPRKADQMVRGSVSLPHGTGKTARVVVFATGDRAEAARAAGADVVGDDDLIARISEGWVDFDAAVASPELMGKVGRLGKVLGPRNLMPNPKTGTVTPDVAKAVTDIKGGKIDFRVDKHSNLHFIIGKTSFEAKALVENYAAALEEILRLKPSSSKGRYISKATVATTFGPGVPMDPNVTSVDSSEL.

It belongs to the universal ribosomal protein uL1 family. In terms of assembly, part of the 50S ribosomal subunit.

In terms of biological role, binds directly to 23S rRNA. The L1 stalk is quite mobile in the ribosome, and is involved in E site tRNA release. Functionally, protein L1 is also a translational repressor protein, it controls the translation of the L11 operon by binding to its mRNA. The protein is Large ribosomal subunit protein uL1 of Micrococcus luteus (strain ATCC 4698 / DSM 20030 / JCM 1464 / CCM 169 / CCUG 5858 / IAM 1056 / NBRC 3333 / NCIMB 9278 / NCTC 2665 / VKM Ac-2230) (Micrococcus lysodeikticus).